A 1027-amino-acid polypeptide reads, in one-letter code: Error-prone DNA polymerase (1027 aa).

This sequence belongs to the DNA polymerase type-C family. DnaE2 subfamily.

The protein localises to the cytoplasm. It carries out the reaction DNA(n) + a 2'-deoxyribonucleoside 5'-triphosphate = DNA(n+1) + diphosphate. Functionally, DNA polymerase involved in damage-induced mutagenesis and translesion synthesis (TLS). It is not the major replicative DNA polymerase. The chain is Error-prone DNA polymerase from Dechloromonas aromatica (strain RCB).